The primary structure comprises 237 residues: Cyclic-di-GMP-binding biofilm dispersal mediator protein (237 aa).

10–34 (LILGGSRGIGAAIVRRFVTDGANVR) is a binding site for NAD(+). Ser132 serves as a coordination point for substrate. Tyr146 (proton acceptor) is an active-site residue.

Belongs to the short-chain dehydrogenases/reductases (SDR) family.

Its function is as follows. Increases biofilm dispersal. Acts by binding directly to the signaling molecule cyclic-di-GMP, which decreases the intracellular concentration of cyclic-di-GMP and leads to biofilm dispersal. Also controls other biofilm-related phenotypes such as cell motility, cell size, cell aggregation and production of extracellular DNA and extracellular polysaccharides (EPS). Does not act as a phosphodiesterase. This chain is Cyclic-di-GMP-binding biofilm dispersal mediator protein (bdcA), found in Escherichia coli (strain K12).